Here is a 158-residue protein sequence, read N- to C-terminus: 2-C-methyl-D-erythritol 2,4-cyclodiphosphate synthase (158 aa).

A divalent metal cation contacts are provided by D9 and H11. 4-CDP-2-C-methyl-D-erythritol 2-phosphate contacts are provided by residues 9-11 (DVH) and 35-36 (HS). H43 contributes to the a divalent metal cation binding site. Residues 57 to 59 (DIG), 62 to 66 (FPDTD), 101 to 107 (AQKPKMA), 133 to 136 (TTTE), F140, and R143 contribute to the 4-CDP-2-C-methyl-D-erythritol 2-phosphate site.

This sequence belongs to the IspF family. In terms of assembly, homotrimer. A divalent metal cation serves as cofactor.

It carries out the reaction 4-CDP-2-C-methyl-D-erythritol 2-phosphate = 2-C-methyl-D-erythritol 2,4-cyclic diphosphate + CMP. The protein operates within isoprenoid biosynthesis; isopentenyl diphosphate biosynthesis via DXP pathway; isopentenyl diphosphate from 1-deoxy-D-xylulose 5-phosphate: step 4/6. Functionally, involved in the biosynthesis of isopentenyl diphosphate (IPP) and dimethylallyl diphosphate (DMAPP), two major building blocks of isoprenoid compounds. Catalyzes the conversion of 4-diphosphocytidyl-2-C-methyl-D-erythritol 2-phosphate (CDP-ME2P) to 2-C-methyl-D-erythritol 2,4-cyclodiphosphate (ME-CPP) with a corresponding release of cytidine 5-monophosphate (CMP). This is 2-C-methyl-D-erythritol 2,4-cyclodiphosphate synthase from Bacillus cereus (strain ATCC 10987 / NRS 248).